We begin with the raw amino-acid sequence, 717 residues long: MPDLLLELRSEEIPARMQRKAAGDLKKLVTDALVERGLTYEGAREYWTPRRLTLDIRGLNARSADVREEKKGPRTDANEKAIEGFLRGAGLNDISEAQVVSDPKKGDFYIAIINKPGRPAEEIIAEVMPGIIRSFPWPKSMRSGPASMPKGSSYAGIEGKGSESLRWVRPLQSIVCLFGPEHDETQVIPFVIDGIVAGNITYGHRFHAPGPITVRRFEDYVSNLEKAKVILDADRRKDIILHDAKDLAFANGLELVEDEGLLEEVSGLVEWPQVLMGTFEEDYLQIPAEIIRLTIKTNQKCFVTRNQGAEEGLSNRFILISNIEASDGGKEIIHGNGKVVRARLSDARHFWNRDQGDLPDLETLKDSAAKFDLDLKKPLDQRMAKLDALNVTFHAKLGTQGERVARIRELAKALAPVVGADGALVDRAVVLAKADLRTEAVGEFPELQGLMGRKYAVLQGENESVAAAIEDHYKPQGPSDRLPADKVAITVALADKLDTLVGFWAIDEKPTGSKDPFALRRAALGVVRILLEKNVRLPLLSVARDSDLLSFFHDRLKVYLRDLGARYDLIDAVLTPESDDLLMIARRVEALTAFITGEDGRNLLAGAKRATQLLAAEEKKGTVVADGVSEELLKLDAEKALYAAIKTASADAAKAVEGEDFRSAMQALSTLRAPVDKFFEDVLVNDEDAAIRANRLALLKAIREATGTVADFSKITG.

The protein belongs to the class-II aminoacyl-tRNA synthetase family. As to quaternary structure, tetramer of two alpha and two beta subunits.

It localises to the cytoplasm. It carries out the reaction tRNA(Gly) + glycine + ATP = glycyl-tRNA(Gly) + AMP + diphosphate. The chain is Glycine--tRNA ligase beta subunit from Agrobacterium fabrum (strain C58 / ATCC 33970) (Agrobacterium tumefaciens (strain C58)).